A 1040-amino-acid polypeptide reads, in one-letter code: Multidrug resistance protein MdtB (1040 aa).

Helical transmembrane passes span 16-36 (FILRPVATTLLMVAILLAGII), 347-367 (LMLAIALVVMIIYLFLRNIPA), 369-389 (IIPAVAVPLSLVGTFAVMVFL), 396-416 (LTLMALTIATGFVVDDAIVVI), 440-460 (IGFTIISLTFSLIAVLIPLLF), 472-492 (FAVTLAVAILISAVVSLTLTP), 537-557 (WLTLGVALGTLALTVLLWIFI), 863-883 (LGSTLWLILASVVAMYIVLGV), 888-908 (FIHPITILSTLPTAGVGALLA), 911-931 (IAGAELDVIAIIGIILLIGIV), 968-988 (ILMTTLAALLGALPLMLSTGV), and 998-1018 (IGMVGGLLVSQVLTLFTTPVI).

It belongs to the resistance-nodulation-cell division (RND) (TC 2.A.6) family. MdtB subfamily. In terms of assembly, part of a tripartite efflux system composed of MdtA, MdtB and MdtC. MdtB forms a heteromultimer with MdtC.

Its subcellular location is the cell inner membrane. The chain is Multidrug resistance protein MdtB from Cronobacter sakazakii (strain ATCC BAA-894) (Enterobacter sakazakii).